The primary structure comprises 444 residues: Phosphoglucosamine mutase (444 aa).

The active-site Phosphoserine intermediate is serine 101. Residues serine 101, aspartate 240, aspartate 242, and aspartate 244 each coordinate Mg(2+). Serine 101 is modified (phosphoserine).

This sequence belongs to the phosphohexose mutase family. Mg(2+) is required as a cofactor. Post-translationally, activated by phosphorylation.

It carries out the reaction alpha-D-glucosamine 1-phosphate = D-glucosamine 6-phosphate. In terms of biological role, catalyzes the conversion of glucosamine-6-phosphate to glucosamine-1-phosphate. This chain is Phosphoglucosamine mutase, found in Aeromonas hydrophila subsp. hydrophila (strain ATCC 7966 / DSM 30187 / BCRC 13018 / CCUG 14551 / JCM 1027 / KCTC 2358 / NCIMB 9240 / NCTC 8049).